The chain runs to 218 residues: Protein-methionine-sulfoxide reductase heme-binding subunit MsrQ (218 aa).

Helical transmembrane passes span 14–34 (LVHA…WQVW), 60–80 (FLLI…AVVI), 86–106 (LGLY…TLDL), 121–141 (PYIT…ITST), and 155–175 (LHTL…WLVK).

This sequence belongs to the MsrQ family. In terms of assembly, heterodimer of a catalytic subunit (MsrP) and a heme-binding subunit (MsrQ). It depends on FMN as a cofactor. Heme b serves as cofactor.

The protein resides in the cell inner membrane. Its function is as follows. Part of the MsrPQ system that repairs oxidized periplasmic proteins containing methionine sulfoxide residues (Met-O), using respiratory chain electrons. Thus protects these proteins from oxidative-stress damage caused by reactive species of oxygen and chlorine generated by the host defense mechanisms. MsrPQ is essential for the maintenance of envelope integrity under bleach stress, rescuing a wide series of structurally unrelated periplasmic proteins from methionine oxidation. MsrQ provides electrons for reduction to the reductase catalytic subunit MsrP, using the quinone pool of the respiratory chain. This Xanthomonas euvesicatoria pv. vesicatoria (strain 85-10) (Xanthomonas campestris pv. vesicatoria) protein is Protein-methionine-sulfoxide reductase heme-binding subunit MsrQ.